The following is a 79-amino-acid chain: Short neurotoxin 4 (79 aa).

The N-terminal stretch at 1–21 (MKTLLLTLVMVTIMCLDLGYT) is a signal peptide. Disulfide bonds link cysteine 24–cysteine 41, cysteine 34–cysteine 59, and cysteine 63–cysteine 71.

Belongs to the three-finger toxin family. Short-chain subfamily. Type III alpha-neurotoxin sub-subfamily. In terms of tissue distribution, expressed by the venom gland.

The protein resides in the secreted. Binds with high affinity to muscle nicotinic acetylcholine receptor (nAChR) and hinders acetylcholine binding to the receptor, thereby impairing neuromuscular transmission. Causes muscle paralysis, spasms and increased respiration. The protein is Short neurotoxin 4 of Pseudonaja textilis (Eastern brown snake).